The sequence spans 236 residues: Phosphatidylserine decarboxylase proenzyme (236 aa).

The active-site Schiff-base intermediate with substrate; via pyruvic acid is S203. S203 is subject to Pyruvic acid (Ser); by autocatalysis.

Belongs to the phosphatidylserine decarboxylase family. PSD-A subfamily. In terms of assembly, heterodimer of a large membrane-associated beta subunit and a small pyruvoyl-containing alpha subunit. Pyruvate serves as cofactor. Post-translationally, is synthesized initially as an inactive proenzyme. Formation of the active enzyme involves a self-maturation process in which the active site pyruvoyl group is generated from an internal serine residue via an autocatalytic post-translational modification. Two non-identical subunits are generated from the proenzyme in this reaction, and the pyruvate is formed at the N-terminus of the alpha chain, which is derived from the carboxyl end of the proenzyme. The post-translation cleavage follows an unusual pathway, termed non-hydrolytic serinolysis, in which the side chain hydroxyl group of the serine supplies its oxygen atom to form the C-terminus of the beta chain, while the remainder of the serine residue undergoes an oxidative deamination to produce ammonia and the pyruvoyl prosthetic group on the alpha chain.

It localises to the cell membrane. It carries out the reaction a 1,2-diacyl-sn-glycero-3-phospho-L-serine + H(+) = a 1,2-diacyl-sn-glycero-3-phosphoethanolamine + CO2. It functions in the pathway phospholipid metabolism; phosphatidylethanolamine biosynthesis; phosphatidylethanolamine from CDP-diacylglycerol: step 2/2. Functionally, catalyzes the formation of phosphatidylethanolamine (PtdEtn) from phosphatidylserine (PtdSer). The chain is Phosphatidylserine decarboxylase proenzyme from Saccharopolyspora erythraea (strain ATCC 11635 / DSM 40517 / JCM 4748 / NBRC 13426 / NCIMB 8594 / NRRL 2338).